A 369-amino-acid polypeptide reads, in one-letter code: UDP-N-acetylenolpyruvoylglucosamine reductase (369 aa).

The FAD-binding PCMH-type domain occupies 29 to 202; the sequence is VGPIARRVIT…LEVEFALDPS (174 aa). Arg176 is an active-site residue. Ser257 serves as the catalytic Proton donor. Glu361 is a catalytic residue.

Belongs to the MurB family. FAD is required as a cofactor.

The protein resides in the cytoplasm. The enzyme catalyses UDP-N-acetyl-alpha-D-muramate + NADP(+) = UDP-N-acetyl-3-O-(1-carboxyvinyl)-alpha-D-glucosamine + NADPH + H(+). The protein operates within cell wall biogenesis; peptidoglycan biosynthesis. Functionally, cell wall formation. The protein is UDP-N-acetylenolpyruvoylglucosamine reductase of Mycobacterium tuberculosis (strain ATCC 25177 / H37Ra).